Consider the following 327-residue polypeptide: Lipoyl synthase (327 aa).

Positions 72, 77, 83, 98, 102, 105, and 313 each coordinate [4Fe-4S] cluster. The Radical SAM core domain occupies 83–302; the sequence is CWSHGTATIM…RKVGLEKGFL (220 aa).

Belongs to the radical SAM superfamily. Lipoyl synthase family. It depends on [4Fe-4S] cluster as a cofactor.

The protein localises to the cytoplasm. The catalysed reaction is [[Fe-S] cluster scaffold protein carrying a second [4Fe-4S](2+) cluster] + N(6)-octanoyl-L-lysyl-[protein] + 2 oxidized [2Fe-2S]-[ferredoxin] + 2 S-adenosyl-L-methionine + 4 H(+) = [[Fe-S] cluster scaffold protein] + N(6)-[(R)-dihydrolipoyl]-L-lysyl-[protein] + 4 Fe(3+) + 2 hydrogen sulfide + 2 5'-deoxyadenosine + 2 L-methionine + 2 reduced [2Fe-2S]-[ferredoxin]. Its pathway is protein modification; protein lipoylation via endogenous pathway; protein N(6)-(lipoyl)lysine from octanoyl-[acyl-carrier-protein]: step 2/2. Functionally, catalyzes the radical-mediated insertion of two sulfur atoms into the C-6 and C-8 positions of the octanoyl moiety bound to the lipoyl domains of lipoate-dependent enzymes, thereby converting the octanoylated domains into lipoylated derivatives. The protein is Lipoyl synthase of Francisella tularensis subsp. mediasiatica (strain FSC147).